The sequence spans 170 residues: Aspartate 1-decarboxylase (170 aa).

Ser-25 (schiff-base intermediate with substrate; via pyruvic acid) is an active-site residue. At Ser-25 the chain carries Pyruvic acid (Ser). Thr-57 is a substrate binding site. Tyr-58 functions as the Proton donor in the catalytic mechanism. Residue 73–75 participates in substrate binding; the sequence is GAA. The interval 118 to 170 is disordered; that stretch reads GHDPAEALPDDPSSLRGDLAVPGNPVTAAARRGTPTHQAPVALPASRTVVAPR.

The protein belongs to the PanD family. In terms of assembly, heterooctamer of four alpha and four beta subunits. Pyruvate is required as a cofactor. Post-translationally, is synthesized initially as an inactive proenzyme, which is activated by self-cleavage at a specific serine bond to produce a beta-subunit with a hydroxyl group at its C-terminus and an alpha-subunit with a pyruvoyl group at its N-terminus.

It is found in the cytoplasm. It carries out the reaction L-aspartate + H(+) = beta-alanine + CO2. It participates in cofactor biosynthesis; (R)-pantothenate biosynthesis; beta-alanine from L-aspartate: step 1/1. Catalyzes the pyruvoyl-dependent decarboxylation of aspartate to produce beta-alanine. The sequence is that of Aspartate 1-decarboxylase from Frankia alni (strain DSM 45986 / CECT 9034 / ACN14a).